The primary structure comprises 325 residues: tRNA pseudouridine synthase B (325 aa).

Asp49 acts as the Nucleophile in catalysis.

This sequence belongs to the pseudouridine synthase TruB family. Type 1 subfamily.

The enzyme catalyses uridine(55) in tRNA = pseudouridine(55) in tRNA. Responsible for synthesis of pseudouridine from uracil-55 in the psi GC loop of transfer RNAs. In Mesorhizobium japonicum (strain LMG 29417 / CECT 9101 / MAFF 303099) (Mesorhizobium loti (strain MAFF 303099)), this protein is tRNA pseudouridine synthase B.